The primary structure comprises 504 residues: Lysine--tRNA ligase (504 aa).

Mg(2+) contacts are provided by Glu414 and Glu421.

This sequence belongs to the class-II aminoacyl-tRNA synthetase family. As to quaternary structure, homodimer. The cofactor is Mg(2+).

The protein localises to the cytoplasm. It carries out the reaction tRNA(Lys) + L-lysine + ATP = L-lysyl-tRNA(Lys) + AMP + diphosphate. The polypeptide is Lysine--tRNA ligase (Photorhabdus laumondii subsp. laumondii (strain DSM 15139 / CIP 105565 / TT01) (Photorhabdus luminescens subsp. laumondii)).